We begin with the raw amino-acid sequence, 150 residues long: Small ribosomal subunit protein eS6 (150 aa).

Belongs to the eukaryotic ribosomal protein eS6 family.

The protein is Small ribosomal subunit protein eS6 of Caldivirga maquilingensis (strain ATCC 700844 / DSM 13496 / JCM 10307 / IC-167).